A 196-amino-acid chain; its full sequence is Gastrula zinc finger protein XlCGF64.1 (196 aa).

7 consecutive C2H2-type zinc fingers follow at residues 6–28 (YECP…QRGH), 34–56 (FMCT…QFIH), 62–84 (YVCT…QRGH), 90–112 (FTCT…QFIH), 118–140 (YECT…QRGH), 146–168 (FMCT…QFIH), and 174–196 (LMCT…KLSH).

Belongs to the krueppel C2H2-type zinc-finger protein family.

Its subcellular location is the nucleus. In terms of biological role, may be involved in transcriptional regulation. This chain is Gastrula zinc finger protein XlCGF64.1, found in Xenopus laevis (African clawed frog).